We begin with the raw amino-acid sequence, 502 residues long: ATP synthase subunit alpha (502 aa).

Residue 169–176 (GDRQTGKT) coordinates ATP.

It belongs to the ATPase alpha/beta chains family. As to quaternary structure, F-type ATPases have 2 components, CF(1) - the catalytic core - and CF(0) - the membrane proton channel. CF(1) has five subunits: alpha(3), beta(3), gamma(1), delta(1), epsilon(1). CF(0) has three main subunits: a(1), b(2) and c(9-12). The alpha and beta chains form an alternating ring which encloses part of the gamma chain. CF(1) is attached to CF(0) by a central stalk formed by the gamma and epsilon chains, while a peripheral stalk is formed by the delta and b chains.

It localises to the cell membrane. The enzyme catalyses ATP + H2O + 4 H(+)(in) = ADP + phosphate + 5 H(+)(out). Functionally, produces ATP from ADP in the presence of a proton gradient across the membrane. The alpha chain is a regulatory subunit. The sequence is that of ATP synthase subunit alpha from Priestia megaterium (strain ATCC 12872 / QMB1551) (Bacillus megaterium).